The following is a 207-amino-acid chain: Probable GTP-binding protein EngB (207 aa).

An EngB-type G domain is found at 23-197 (AGIEVVFAGR…ETVIGRWLFA (175 aa)). GTP-binding positions include 31 to 38 (GRSNAGKS), 58 to 62 (GRTQL), 76 to 79 (DLPG), 143 to 146 (TKAD), and 176 to 178 (FSS). Mg(2+)-binding residues include Ser38 and Thr60.

It belongs to the TRAFAC class TrmE-Era-EngA-EngB-Septin-like GTPase superfamily. EngB GTPase family. Requires Mg(2+) as cofactor.

Necessary for normal cell division and for the maintenance of normal septation. In Methylobacillus flagellatus (strain ATCC 51484 / DSM 6875 / VKM B-1610 / KT), this protein is Probable GTP-binding protein EngB.